The sequence spans 341 residues: S-adenosylmethionine:tRNA ribosyltransferase-isomerase (341 aa).

Belongs to the QueA family. As to quaternary structure, monomer.

It localises to the cytoplasm. The enzyme catalyses 7-aminomethyl-7-carbaguanosine(34) in tRNA + S-adenosyl-L-methionine = epoxyqueuosine(34) in tRNA + adenine + L-methionine + 2 H(+). The protein operates within tRNA modification; tRNA-queuosine biosynthesis. Its function is as follows. Transfers and isomerizes the ribose moiety from AdoMet to the 7-aminomethyl group of 7-deazaguanine (preQ1-tRNA) to give epoxyqueuosine (oQ-tRNA). This chain is S-adenosylmethionine:tRNA ribosyltransferase-isomerase, found in Chlorobium phaeobacteroides (strain DSM 266 / SMG 266 / 2430).